The chain runs to 557 residues: Urocanate hydratase (557 aa).

Residues 53 to 54 (GG), glutamine 131, 177 to 179 (GMG), glutamate 197, 243 to 244 (NA), 264 to 268 (QTSAH), 274 to 275 (YL), and tyrosine 323 each bind NAD(+). Cysteine 411 is a catalytic residue. Residue glycine 493 participates in NAD(+) binding.

Belongs to the urocanase family. NAD(+) serves as cofactor.

Its subcellular location is the cytoplasm. The catalysed reaction is 4-imidazolone-5-propanoate = trans-urocanate + H2O. It participates in amino-acid degradation; L-histidine degradation into L-glutamate; N-formimidoyl-L-glutamate from L-histidine: step 2/3. Catalyzes the conversion of urocanate to 4-imidazolone-5-propionate. In Mesorhizobium japonicum (strain LMG 29417 / CECT 9101 / MAFF 303099) (Mesorhizobium loti (strain MAFF 303099)), this protein is Urocanate hydratase.